We begin with the raw amino-acid sequence, 408 residues long: Broad specificity amino-acid racemase (408 aa).

The first 21 residues, 1–21 (MHKKTLLATLILGLLAGQAVA), serve as a signal peptide directing secretion. A disulfide bridge connects residues cysteine 70 and cysteine 96. The active-site Proton acceptor is lysine 74. N6-(pyridoxal phosphate)lysine is present on lysine 74. Residue arginine 173 coordinates substrate. The active-site Proton acceptor is the tyrosine 300. Methionine 348 contributes to the substrate binding site.

Belongs to the alanine racemase family. Bsr subfamily. Homodimer. Pyridoxal 5'-phosphate serves as cofactor.

Its subcellular location is the periplasm. The enzyme catalyses an L-alpha-amino acid = a D-alpha-amino acid. It catalyses the reaction L-lysine = D-lysine. The catalysed reaction is L-arginine = D-arginine. It carries out the reaction L-alanine = D-alanine. The enzyme catalyses L-serine = D-serine. It catalyses the reaction L-methionine = D-methionine. The catalysed reaction is L-leucine = D-leucine. It carries out the reaction L-cysteine = D-cysteine. The enzyme catalyses L-glutamine = D-glutamine. It catalyses the reaction L-asparagine = D-asparagine. The catalysed reaction is L-histidine = D-histidine. Amino-acid racemase able to utilize a broad range of substrates. Reversibly racemizes ten of the 19 natural chiral amino acids known, including both non-beta-branched aliphatic amino acids (Ala, Leu, Met, Ser, Cys, Gln and Asn) and positively charged amino acids (His, Lys and Arg). Is not active on negatively charged (Glu and Asp) or aromatic (Tyr, Trp and Phe) amino acids and displays minimal activity towards beta-branched aliphatic (Ile, Val and Thr) substrates. Enables bacteria to produce and release extracellular non-canonical D-amino acids (NCDAAs) that regulate diverse cellular processes. The sequence is that of Broad specificity amino-acid racemase from Aeromonas hydrophila subsp. hydrophila (strain ATCC 7966 / DSM 30187 / BCRC 13018 / CCUG 14551 / JCM 1027 / KCTC 2358 / NCIMB 9240 / NCTC 8049).